A 680-amino-acid polypeptide reads, in one-letter code: Fermitin family homolog 2 (680 aa).

Residues 40 to 81 are interaction with membranes containing phosphatidylinositol phosphate; it reads HIGGVMLKLVEKLDVKKDWSDHALWWEKKRTWLLKTHWTLDK. The interval 141–165 is disordered; sequence LKKPRDPTKKKKKKLDDQSEDEALE. A phosphoserine mark is found at Ser-159, Ser-181, Ser-339, and Ser-351. Positions 189 to 661 constitute an FERM domain; it reads MTPTYDAHDG…GYIFLSTRAK (473 aa). Residues 380 to 476 enclose the PH domain; that stretch reads KVFKPKKLTL…WMAACRLASK (97 aa). Position 383 (Lys-383) interacts with a 1,2-diacyl-sn-glycero-3-phospho-(1D-myo-inositol-3,4,5-trisphosphate). Ser-666 is subject to Phosphoserine.

The protein belongs to the kindlin family. Interacts with ILK. Interacts with FBLIM1. Interacts with ITGB1 and ITGB3. Interacts with active, unphosphorylated CTNNB1. Identified in a complex with CTNNB1 and TCF7L2/TCF4. Interacts with ITGB1; the interaction is inhibited in presence of ITGB1BP1. Ubiquitous. Found in numerous tumor tissues.

The protein resides in the cytoplasm. The protein localises to the cell cortex. Its subcellular location is the cytoskeleton. It is found in the stress fiber. It localises to the cell junction. The protein resides in the focal adhesion. The protein localises to the membrane. Its subcellular location is the cell projection. It is found in the lamellipodium membrane. It localises to the nucleus. The protein resides in the myofibril. The protein localises to the sarcomere. Its subcellular location is the i band. It is found in the cell surface. Its function is as follows. Scaffolding protein that enhances integrin activation mediated by TLN1 and/or TLN2, but activates integrins only weakly by itself. Binds to membranes enriched in phosphoinositides. Enhances integrin-mediated cell adhesion onto the extracellular matrix and cell spreading; this requires both its ability to interact with integrins and with phospholipid membranes. Required for the assembly of focal adhesions. Participates in the connection between extracellular matrix adhesion sites and the actin cytoskeleton and also in the orchestration of actin assembly and cell shape modulation. Recruits FBLIM1 to focal adhesions. Plays a role in the TGFB1 and integrin signaling pathways. Stabilizes active CTNNB1 and plays a role in the regulation of transcription mediated by CTNNB1 and TCF7L2/TCF4 and in Wnt signaling. The protein is Fermitin family homolog 2 (FERMT2) of Homo sapiens (Human).